A 496-amino-acid polypeptide reads, in one-letter code: Cytochrome P450 71AV8 (496 aa).

A helical transmembrane segment spans residues 3–23 (ISIPTTLGLAVIIFIIFKLLT). Cysteine 432 provides a ligand contact to heme.

This sequence belongs to the cytochrome P450 family. It depends on heme as a cofactor.

The protein localises to the membrane. Functionally, valencene oxidase, which preferentially hydroylates the C2 position of (+)-valencene in the trans-orientation, producing trans-nootkatol that can be further oxidized to (+)-nootkatone. Can also catalyze the three-step conversion of germacrene A to germacra-1(10),4,11(13)-trien-12-oic acid and the partial conversion of the non-natural substrate amorpha-4,11-diene into artemisinic alcohol and artemisinic aldehyde. In Cichorium intybus (Chicory), this protein is Cytochrome P450 71AV8 (CYP71AV8).